Reading from the N-terminus, the 211-residue chain is Pyridoxine/pyridoxamine 5'-phosphate oxidase (211 aa).

Residues 7-10 and Lys-65 each bind substrate; that span reads RREY. FMN contacts are provided by residues 60–65, 75–76, Arg-81, Lys-82, and Gln-104; these read RIVLLK and YT. Substrate contacts are provided by Tyr-122, Arg-126, and Ser-130. FMN contacts are provided by residues 139–140 and Trp-184; that span reads QS. 190–192 lines the substrate pocket; that stretch reads RLH. An FMN-binding site is contributed by Arg-194.

This sequence belongs to the pyridoxamine 5'-phosphate oxidase family. Homodimer. The cofactor is FMN.

The enzyme catalyses pyridoxamine 5'-phosphate + O2 + H2O = pyridoxal 5'-phosphate + H2O2 + NH4(+). It carries out the reaction pyridoxine 5'-phosphate + O2 = pyridoxal 5'-phosphate + H2O2. It functions in the pathway cofactor metabolism; pyridoxal 5'-phosphate salvage; pyridoxal 5'-phosphate from pyridoxamine 5'-phosphate: step 1/1. Its pathway is cofactor metabolism; pyridoxal 5'-phosphate salvage; pyridoxal 5'-phosphate from pyridoxine 5'-phosphate: step 1/1. Its function is as follows. Catalyzes the oxidation of either pyridoxine 5'-phosphate (PNP) or pyridoxamine 5'-phosphate (PMP) into pyridoxal 5'-phosphate (PLP). This Vibrio atlanticus (strain LGP32) (Vibrio splendidus (strain Mel32)) protein is Pyridoxine/pyridoxamine 5'-phosphate oxidase.